Consider the following 522-residue polypeptide: Transactivator/viroplasmin protein (522 aa).

Over residues 111–126 the composition is skewed to polar residues; sequence QGIQIPQKSEPNSSVA. Disordered regions lie at residues 111-133 and 491-522; these read QGIQ…AESG and SADS…KASG.

It belongs to the caulimoviridae viroplasmin family.

The protein resides in the host cytoplasm. In terms of biological role, enhances the ribosomal termination-reinitiation event leading to the translation of major open reading frames on the polycistronic viral RNAs. This Arabidopsis thaliana (Mouse-ear cress) protein is Transactivator/viroplasmin protein.